The primary structure comprises 430 residues: Adenylosuccinate synthetase (430 aa).

GTP is bound by residues 12–18 (GDEGKGK) and 40–42 (GHT). D13 (proton acceptor) is an active-site residue. Mg(2+) contacts are provided by D13 and G40. IMP is bound by residues 13–16 (DEGK), 38–41 (NAGH), T128, R142, Q223, T238, and R302. The active-site Proton donor is the H41. 298-304 (TTTGRPR) lines the substrate pocket. GTP is bound by residues R304, 330–332 (SID), and 413–415 (SVG).

This sequence belongs to the adenylosuccinate synthetase family. Homodimer. Requires Mg(2+) as cofactor.

The protein resides in the cytoplasm. It catalyses the reaction IMP + L-aspartate + GTP = N(6)-(1,2-dicarboxyethyl)-AMP + GDP + phosphate + 2 H(+). The protein operates within purine metabolism; AMP biosynthesis via de novo pathway; AMP from IMP: step 1/2. Plays an important role in the de novo pathway of purine nucleotide biosynthesis. Catalyzes the first committed step in the biosynthesis of AMP from IMP. The chain is Adenylosuccinate synthetase from Lactococcus lactis subsp. lactis (strain IL1403) (Streptococcus lactis).